A 162-amino-acid polypeptide reads, in one-letter code: Troponin C, skeletal muscle (162 aa).

Ala-1 is subject to N-acetylalanine. 4 EF-hand domains span residues 17–52 (EMIAEFKAAFDMFDTDGGGDISTKELGTVMRMLGQT), 53–88 (PTKEELDAIIEEVDEDGSGTIDFEEFLVMMVRQMKE), 93–128 (KSEEELAECFRIFDKNADGYIDSEELGEILRSSGES), and 129–162 (ITDEEIEELMKDGDKNNDGKIDFDEFLKMMEGVQ). Residues Asp-30, Asp-32, Asp-36, Glu-41, Asp-66, Asp-68, Ser-70, Thr-72, Glu-77, Asp-106, Asn-108, Asp-110, Tyr-112, Glu-117, Asp-142, Asn-144, Asp-146, Lys-148, and Glu-153 each contribute to the Ca(2+) site.

The protein belongs to the troponin C family.

Functionally, troponin is the central regulatory protein of striated muscle contraction. Tn consists of three components: Tn-I which is the inhibitor of actomyosin ATPase, Tn-T which contains the binding site for tropomyosin and Tn-C. The binding of calcium to Tn-C abolishes the inhibitory action of Tn on actin filaments. The protein is Troponin C, skeletal muscle of Pelophylax lessonae (Pool frog).